The primary structure comprises 101 residues: DNA-binding protein Fis (101 aa).

A DNA-binding region (H-T-H motif) is located at residues 77-96 (QTRAANMLGINRGTLRKKLK).

It belongs to the transcriptional regulatory Fis family. In terms of assembly, homodimer.

Its function is as follows. Activates ribosomal RNA transcription. Plays a direct role in upstream activation of rRNA promoters. This Shewanella denitrificans (strain OS217 / ATCC BAA-1090 / DSM 15013) protein is DNA-binding protein Fis.